The primary structure comprises 364 residues: Histidinol-phosphate aminotransferase (364 aa).

The residue at position 224 (Lys-224) is an N6-(pyridoxal phosphate)lysine.

Belongs to the class-II pyridoxal-phosphate-dependent aminotransferase family. Histidinol-phosphate aminotransferase subfamily. In terms of assembly, homodimer. Pyridoxal 5'-phosphate is required as a cofactor.

It catalyses the reaction L-histidinol phosphate + 2-oxoglutarate = 3-(imidazol-4-yl)-2-oxopropyl phosphate + L-glutamate. Its pathway is amino-acid biosynthesis; L-histidine biosynthesis; L-histidine from 5-phospho-alpha-D-ribose 1-diphosphate: step 7/9. This is Histidinol-phosphate aminotransferase from Anaeromyxobacter sp. (strain Fw109-5).